The following is a 458-amino-acid chain: Maturase-like protein 1 (458 aa).

This sequence to group II intron maturases.

The protein resides in the plastid. It localises to the chloroplast. Its function is as follows. Could be required for group III intron excision. This chain is Maturase-like protein 1 (mat1), found in Euglena gracilis.